The following is a 107-amino-acid chain: Large ribosomal subunit protein P1 (107 aa).

The interval 67 to 107 is disordered; that stretch reads GAAPAAAAPAAGGAPAAGAAPKKEEKKEPSEEEDMGFSLFD. Positions 69 to 86 are enriched in low complexity; it reads APAAAAPAAGGAPAAGAA.

It belongs to the eukaryotic ribosomal protein P1/P2 family. In terms of assembly, P1 and P2 exist as dimers at the large ribosomal subunit.

Functionally, plays an important role in the elongation step of protein synthesis. In Chlamydomonas reinhardtii (Chlamydomonas smithii), this protein is Large ribosomal subunit protein P1.